Reading from the N-terminus, the 505-residue chain is Ribose import ATP-binding protein RbsA 1 (505 aa).

2 consecutive ABC transporter domains span residues 13 to 249 (LALR…VGRD) and 254 to 503 (YPKQ…TGRA). 45 to 52 (GENGAGKS) is a binding site for ATP.

It belongs to the ABC transporter superfamily. Ribose importer (TC 3.A.1.2.1) family. As to quaternary structure, the complex is composed of an ATP-binding protein (RbsA), two transmembrane proteins (RbsC) and a solute-binding protein (RbsB).

Its subcellular location is the cell membrane. The catalysed reaction is D-ribose(out) + ATP + H2O = D-ribose(in) + ADP + phosphate + H(+). In terms of biological role, part of the ABC transporter complex RbsABC involved in ribose import. Responsible for energy coupling to the transport system. This is Ribose import ATP-binding protein RbsA 1 from Streptomyces coelicolor (strain ATCC BAA-471 / A3(2) / M145).